Consider the following 622-residue polypeptide: Type 2 DNA topoisomerase 6 subunit B (622 aa).

Residues asparagine 48, aspartate 80, serine 101–arginine 102, glycine 111–serine 118, and lysine 435 contribute to the ATP site.

The protein belongs to the TOP6B family. As to quaternary structure, homodimer. Heterotetramer of two Top6A and two Top6B chains.

The enzyme catalyses ATP-dependent breakage, passage and rejoining of double-stranded DNA.. Relaxes both positive and negative superturns and exhibits a strong decatenase activity. This is Type 2 DNA topoisomerase 6 subunit B from Methanococcoides burtonii (strain DSM 6242 / NBRC 107633 / OCM 468 / ACE-M).